Here is a 515-residue protein sequence, read N- to C-terminus: 2,3-bisphosphoglycerate-independent phosphoglycerate mutase (515 aa).

Mn(2+) is bound by residues Asp-14 and Ser-64. Ser-64 (phosphoserine intermediate) is an active-site residue. Residues His-125, 155-156 (RD), Arg-187, Arg-193, 263-266 (RADR), and Lys-337 contribute to the substrate site. Mn(2+) contacts are provided by Asp-404, His-408, Asp-445, His-446, and His-464.

Belongs to the BPG-independent phosphoglycerate mutase family. Monomer. Requires Mn(2+) as cofactor.

The enzyme catalyses (2R)-2-phosphoglycerate = (2R)-3-phosphoglycerate. Its pathway is carbohydrate degradation; glycolysis; pyruvate from D-glyceraldehyde 3-phosphate: step 3/5. In terms of biological role, catalyzes the interconversion of 2-phosphoglycerate and 3-phosphoglycerate. The polypeptide is 2,3-bisphosphoglycerate-independent phosphoglycerate mutase (Pseudomonas paraeruginosa (strain DSM 24068 / PA7) (Pseudomonas aeruginosa (strain PA7))).